The sequence spans 401 residues: MTTLGTPLSPSATKVMLLGSGELGKEVLIALQRLGVETIAVDRYDNAPGQQVAHHARTIAMSDPDQLKALIEAEKPHLVVPEIEAIATPMLETLEAAGTVRVIPTARAARLTMDREGIRRLAAESLGLPTSPYKFCDSLEELQAAIDGGIGYPCVVKPVMSSSGKGQSKIDGPEGVKAAWDYAMAGGRVSHGRVIVEGFIDFDYEITLLTVRAIGASGQVETRFCAPIGHVQVSGDYVESWQPQPMHPAALASAQRIAQAVTADLGGMGLFGVELFVKGEQVWFSEVSPRPHDTGMVTMATQWQNEFELHARAILGLPVDTTLRSPGASAVIYGGVEAQGVVFDGVDQALRVPQTEVRLFGKPESFARRRMGVALAYADDIDTARTRAKEAASRVRPRAVG.

Residues 22–23 and Glu-82 contribute to the N(1)-(5-phospho-beta-D-ribosyl)glycinamide site; that span reads EL. ATP contacts are provided by residues Arg-115, Lys-157, 162–167, 197–200, and Glu-205; these read SSGKGQ and EGFI. The 196-residue stretch at 120-315 folds into the ATP-grasp domain; that stretch reads RLAAESLGLP…EFELHARAIL (196 aa). Glu-274 and Glu-286 together coordinate Mg(2+). Residues Asp-293, Lys-362, and 369-370 contribute to the N(1)-(5-phospho-beta-D-ribosyl)glycinamide site; that span reads RR.

Belongs to the PurK/PurT family. As to quaternary structure, homodimer.

It catalyses the reaction N(1)-(5-phospho-beta-D-ribosyl)glycinamide + formate + ATP = N(2)-formyl-N(1)-(5-phospho-beta-D-ribosyl)glycinamide + ADP + phosphate + H(+). Its pathway is purine metabolism; IMP biosynthesis via de novo pathway; N(2)-formyl-N(1)-(5-phospho-D-ribosyl)glycinamide from N(1)-(5-phospho-D-ribosyl)glycinamide (formate route): step 1/1. In terms of biological role, involved in the de novo purine biosynthesis. Catalyzes the transfer of formate to 5-phospho-ribosyl-glycinamide (GAR), producing 5-phospho-ribosyl-N-formylglycinamide (FGAR). Formate is provided by PurU via hydrolysis of 10-formyl-tetrahydrofolate. This chain is Formate-dependent phosphoribosylglycinamide formyltransferase, found in Cupriavidus taiwanensis (strain DSM 17343 / BCRC 17206 / CCUG 44338 / CIP 107171 / LMG 19424 / R1) (Ralstonia taiwanensis (strain LMG 19424)).